A 581-amino-acid polypeptide reads, in one-letter code: FAD-linked oxidoreductase easE (581 aa).

The signal sequence occupies residues 1-25; that stretch reads MYRLLGPLACLALAWFFTWAPSGRC. 2 N-linked (GlcNAc...) asparagine glycosylation sites follow: Asn-44 and Asn-73. One can recognise an FAD-binding PCMH-type domain in the interval 122 to 306; it reads HQGRIPLYSA…AQATIRVFPD (185 aa). Asn-369 carries an N-linked (GlcNAc...) asparagine glycan.

It belongs to the oxygen-dependent FAD-linked oxidoreductase family. FAD serves as cofactor.

It participates in alkaloid biosynthesis; ergot alkaloid biosynthesis. In terms of biological role, FAD-linked oxidoreductase; part of the gene cluster that mediates the biosynthesis of fungal ergot alkaloid. DmaW catalyzes the first step of ergot alkaloid biosynthesis by condensing dimethylallyl diphosphate (DMAP) and tryptophan to form 4-dimethylallyl-L-tryptophan. The second step is catalyzed by the methyltransferase easF that methylates 4-dimethylallyl-L-tryptophan in the presence of S-adenosyl-L-methionine, resulting in the formation of 4-dimethylallyl-L-abrine. The catalase easC and the FAD-dependent oxidoreductase easE then transform 4-dimethylallyl-L-abrine to chanoclavine-I which is further oxidized by easD in the presence of NAD(+), resulting in the formation of chanoclavine-I aldehyde. Agroclavine dehydrogenase easG then mediates the conversion of chanoclavine-I aldehyde to agroclavine via a non-enzymatic adduct reaction: the substrate is an iminium intermediate that is formed spontaneously from chanoclavine-I aldehyde in the presence of glutathione. Further conversion of agroclavine to paspalic acid is a two-step process involving oxidation of agroclavine to elymoclavine and of elymoclavine to paspalic acid, the second step being performed by the elymoclavine oxidase cloA. However, cloA does not encode a functional enzyme indicating that C.fusiformis terminates its ergot alkaloid pathway at elymoclavine. The polypeptide is FAD-linked oxidoreductase easE (Claviceps fusiformis (Ergot fungus)).